The following is a 392-amino-acid chain: Succinate--CoA ligase [ADP-forming] subunit beta (392 aa).

The 240-residue stretch at 9–248 folds into the ATP-grasp domain; it reads KGILKQFGVA…ITEEDPLEYE (240 aa). Residues Lys50, 57 to 59, Glu103, Met106, and Glu111 each bind ATP; that span reads GRG. Mg(2+) is bound by residues Asn203 and Asp217. Substrate-binding positions include Asn268 and 325–327; that span reads GIV.

This sequence belongs to the succinate/malate CoA ligase beta subunit family. In terms of assembly, heterotetramer of two alpha and two beta subunits. It depends on Mg(2+) as a cofactor.

The catalysed reaction is succinate + ATP + CoA = succinyl-CoA + ADP + phosphate. It carries out the reaction GTP + succinate + CoA = succinyl-CoA + GDP + phosphate. It functions in the pathway carbohydrate metabolism; tricarboxylic acid cycle; succinate from succinyl-CoA (ligase route): step 1/1. In terms of biological role, succinyl-CoA synthetase functions in the citric acid cycle (TCA), coupling the hydrolysis of succinyl-CoA to the synthesis of either ATP or GTP and thus represents the only step of substrate-level phosphorylation in the TCA. The beta subunit provides nucleotide specificity of the enzyme and binds the substrate succinate, while the binding sites for coenzyme A and phosphate are found in the alpha subunit. The protein is Succinate--CoA ligase [ADP-forming] subunit beta of Chlorobaculum parvum (strain DSM 263 / NCIMB 8327) (Chlorobium vibrioforme subsp. thiosulfatophilum).